The chain runs to 245 residues: MVAVSGTQRTRTVSLARWAVYAGSVFAGAWLATQLFYLAQIALWLFVNPGSTAFMRTDAWWLSRDTPPAQIRHQWVPYDQISRNLKRALIASEDSTFATNNGYDVDAILQAWEKNKARGRIVAGGSTITQQLARNLFLSREKSYIRKGQELIITWMLETVLDKERIFEIYLNSVEWGRGVYGAEAAARYYYKIPASRLGAWQSARLAVMLPKPRWFDAHRGSAYQAQRAAVIARRMGAAELPQSE.

A helical membrane pass occupies residues 20–42 (VYAGSVFAGAWLATQLFYLAQIA).

This sequence belongs to the glycosyltransferase 51 family.

Its subcellular location is the cell inner membrane. It carries out the reaction [GlcNAc-(1-&gt;4)-Mur2Ac(oyl-L-Ala-gamma-D-Glu-L-Lys-D-Ala-D-Ala)](n)-di-trans,octa-cis-undecaprenyl diphosphate + beta-D-GlcNAc-(1-&gt;4)-Mur2Ac(oyl-L-Ala-gamma-D-Glu-L-Lys-D-Ala-D-Ala)-di-trans,octa-cis-undecaprenyl diphosphate = [GlcNAc-(1-&gt;4)-Mur2Ac(oyl-L-Ala-gamma-D-Glu-L-Lys-D-Ala-D-Ala)](n+1)-di-trans,octa-cis-undecaprenyl diphosphate + di-trans,octa-cis-undecaprenyl diphosphate + H(+). The protein operates within cell wall biogenesis; peptidoglycan biosynthesis. Functionally, peptidoglycan polymerase that catalyzes glycan chain elongation from lipid-linked precursors. The protein is Biosynthetic peptidoglycan transglycosylase of Burkholderia cenocepacia (strain HI2424).